The sequence spans 412 residues: FAD-dependent monooxygenase nscC (412 aa).

An N-terminal signal peptide occupies residues 1-21; it reads MGKQQETILIIGAGISGLATS. Residues E35 and A46 each coordinate FAD. The N-linked (GlcNAc...) asparagine glycan is linked to N92. R119 contributes to the FAD binding site. N-linked (GlcNAc...) asparagine glycans are attached at residues N170 and N231. FAD contacts are provided by D326 and G339.

The protein belongs to the paxM FAD-dependent monooxygenase family. Requires FAD as cofactor.

Its pathway is secondary metabolite biosynthesis. Functionally, FAD-dependent monooxygenase; part of the gene cluster that mediates the biosynthesis of neosartoricin B, a prenylated anthracenone that probably exhibits T-cell antiproliferative activity, suggestive of a physiological role as an immunosuppressive agent. The non-reducing polyketide synthase nscA probably synthesizes and cyclizes the decaketide backbone. The hydrolase nscB then mediates the product release through hydrolysis followed by spontaneous decarboxylation. The prenyltransferase nscD catalyzes the addition of the dimethylallyl group to the aromatic C5. The FAD-dependent monooxygenase nscC is then responsible for the stereospecific hydroxylation at C2. Neosartoricin B can be converted into two additional compounds neosartoricins C and D. Neosartoricin C is a spirocyclic compound that is cyclized through the attack of C3 hydroxyl on C14, followed by dehydration. On the other hand, neosartoricin D is a further cyclized compound in which attack of C2 on C14 in neosartoricin C results in the formation of the acetal-containing dioxabicyclo-octanone ring. Both of these compounds are novel and possibly represent related metabolites of the gene cluster. The protein is FAD-dependent monooxygenase nscC of Trichophyton tonsurans (strain CBS 112818) (Scalp ringworm fungus).